The sequence spans 335 residues: Geranylgeranyl pyrophosphate synthase BTS1 (335 aa).

K36, R39, and H68 together coordinate isopentenyl diphosphate. Residues D75 and D79 each contribute to the Mg(2+) site. R84 is a binding site for dimethylallyl diphosphate. R85 lines the isopentenyl diphosphate pocket. Residues K169, T170, Q206, N213, K223, and K233 each coordinate dimethylallyl diphosphate.

Belongs to the FPP/GGPP synthase family. Requires Mg(2+) as cofactor.

The protein localises to the cytoplasm. The catalysed reaction is isopentenyl diphosphate + dimethylallyl diphosphate = (2E)-geranyl diphosphate + diphosphate. It carries out the reaction isopentenyl diphosphate + (2E)-geranyl diphosphate = (2E,6E)-farnesyl diphosphate + diphosphate. It catalyses the reaction isopentenyl diphosphate + (2E,6E)-farnesyl diphosphate = (2E,6E,10E)-geranylgeranyl diphosphate + diphosphate. It participates in isoprenoid biosynthesis; farnesyl diphosphate biosynthesis; farnesyl diphosphate from geranyl diphosphate and isopentenyl diphosphate: step 1/1. Its pathway is isoprenoid biosynthesis; geranyl diphosphate biosynthesis; geranyl diphosphate from dimethylallyl diphosphate and isopentenyl diphosphate: step 1/1. It functions in the pathway isoprenoid biosynthesis; geranylgeranyl diphosphate biosynthesis; geranylgeranyl diphosphate from farnesyl diphosphate and isopentenyl diphosphate: step 1/1. Its function is as follows. Catalyzes the trans-addition of the 3 molecules of IPP onto DMAPP to form geranylgeranyl pyrophosphate. Required for the membrane attachment of YPT1 and SEC4. May be involved in vesicle trafficking and protein sorting. The chain is Geranylgeranyl pyrophosphate synthase BTS1 (BTS1) from Saccharomyces cerevisiae (strain ATCC 204508 / S288c) (Baker's yeast).